A 598-amino-acid chain; its full sequence is Elongation factor 4 (598 aa).

Positions 4–186 (KHIRNFSIIA…VIVRQIPPPE (183 aa)) constitute a tr-type G domain. GTP-binding positions include 16-21 (DHGKST) and 133-136 (NKID).

The protein belongs to the TRAFAC class translation factor GTPase superfamily. Classic translation factor GTPase family. LepA subfamily.

The protein localises to the cell inner membrane. The enzyme catalyses GTP + H2O = GDP + phosphate + H(+). Its function is as follows. Required for accurate and efficient protein synthesis under certain stress conditions. May act as a fidelity factor of the translation reaction, by catalyzing a one-codon backward translocation of tRNAs on improperly translocated ribosomes. Back-translocation proceeds from a post-translocation (POST) complex to a pre-translocation (PRE) complex, thus giving elongation factor G a second chance to translocate the tRNAs correctly. Binds to ribosomes in a GTP-dependent manner. This chain is Elongation factor 4, found in Pseudoalteromonas atlantica (strain T6c / ATCC BAA-1087).